We begin with the raw amino-acid sequence, 381 residues long: Prostatic acid phosphatase (381 aa).

The signal sequence occupies residues 1–31 (MRAVPLPLSRTASLSLGFLLLLSLCLDPGQA). Residue Arg-42 coordinates substrate. His-43 (nucleophile) is an active-site residue. Arg-46 serves as a coordination point for substrate. N-linked (GlcNAc...) asparagine glycosylation is present at Asn-93. Arg-110 is a binding site for substrate. 3 cysteine pairs are disulfide-bonded: Cys-160–Cys-371, Cys-214–Cys-312, and Cys-346–Cys-350. An N-linked (GlcNAc...) asparagine glycan is attached at Asn-219. His-288 contacts substrate. Catalysis depends on Asp-289, which acts as the Proton donor. Asn-332 carries an N-linked (GlcNAc...) asparagine glycan.

Belongs to the histidine acid phosphatase family. As to quaternary structure, homodimer; dimer formation is required for phosphatase activity. As to expression, expressed in salivary gland, thymus and thyroid gland. Widely expressed in prostate lobes, brain, kidney, liver, lung, muscle, placenta, salivary gland, spleen, thyroid and thymus. Locates to Schwann cells and fibroblasts. Expressed in peptidergic and non-peptidergic nociceptive (pain-sensing) neurons. Preferentially expressed in non-peptidergic doral root ganglia neurons.

The protein resides in the secreted. The protein localises to the cell membrane. Its subcellular location is the lysosome membrane. The catalysed reaction is a phosphate monoester + H2O = an alcohol + phosphate. The enzyme catalyses a ribonucleoside 5'-phosphate + H2O = a ribonucleoside + phosphate. It carries out the reaction 1-(9Z-octadecenoyl)-sn-glycero-3-phosphate + H2O = 1-(9Z-octadecenoyl)-sn-glycerol + phosphate. It catalyses the reaction O-phospho-L-tyrosyl-[protein] + H2O = L-tyrosyl-[protein] + phosphate. In terms of biological role, a non-specific tyrosine phosphatase that dephosphorylates a diverse number of substrates under acidic conditions (pH 4-6) including alkyl, aryl, and acyl orthophosphate monoesters and phosphorylated proteins. Has lipid phosphatase activity and inactivates lysophosphatidic acid in seminal plasma. Functionally, in addition to its tyrosine phosphatase activity, also has ecto-5'-nucleotidase activity in dorsal root ganglion (DRG) neurons. Generates adenosine from AMP. This extracellular adenosine leads to a decrease in chronic pain by activating A1R in nociceptive neurons. The polypeptide is Prostatic acid phosphatase (Acp3) (Mus musculus (Mouse)).